The chain runs to 73 residues: Translation initiation factor IF-1 (73 aa).

The 72-residue stretch at 1–72 (MAKQDVIEME…TKGRITYRLR (72 aa)) folds into the S1-like domain.

Belongs to the IF-1 family. As to quaternary structure, component of the 30S ribosomal translation pre-initiation complex which assembles on the 30S ribosome in the order IF-2 and IF-3, IF-1 and N-formylmethionyl-tRNA(fMet); mRNA recruitment can occur at any time during PIC assembly.

The protein localises to the cytoplasm. In terms of biological role, one of the essential components for the initiation of protein synthesis. Stabilizes the binding of IF-2 and IF-3 on the 30S subunit to which N-formylmethionyl-tRNA(fMet) subsequently binds. Helps modulate mRNA selection, yielding the 30S pre-initiation complex (PIC). Upon addition of the 50S ribosomal subunit IF-1, IF-2 and IF-3 are released leaving the mature 70S translation initiation complex. This is Translation initiation factor IF-1 from Gloeobacter violaceus (strain ATCC 29082 / PCC 7421).